A 289-amino-acid chain; its full sequence is Metal-staphylopine import system permease protein CntC (289 aa).

5 helical membrane passes run 13–33 (AVIA…APLV), 77–97 (LLYV…LGFL), 115–135 (VMLA…FGMG), 194–214 (IAII…GFSF), and 249–269 (IAIV…QIAI). Positions 73 to 262 (IRPSLLYVFV…IIVMAFNFLS (190 aa)) constitute an ABC transmembrane type-1 domain.

It belongs to the binding-protein-dependent transport system permease family. As to quaternary structure, the complex is composed of two ATP-binding proteins (CntD and CntF), two transmembrane proteins (CntB and CntC) and a solute-binding protein (CntA).

The protein resides in the cell membrane. In terms of biological role, part of the ABC transporter complex CntABCDF (Opp1) involved in the uptake of metal in complex with the metallophore staphylopine (StP). May be involved in the import of a large array of divalent metals ions such as nickel, cobalt, zinc, copper and iron. Probably responsible for the translocation of the substrate across the membrane. This is Metal-staphylopine import system permease protein CntC from Staphylococcus aureus (strain Mu50 / ATCC 700699).